We begin with the raw amino-acid sequence, 336 residues long: tRNA N6-adenosine threonylcarbamoyltransferase (336 aa).

Fe cation contacts are provided by His114 and His118. Substrate is bound by residues 136–140, Asp169, Gly182, Asp186, and Asn275; that span reads LVSGG. Asp301 contributes to the Fe cation binding site.

It belongs to the KAE1 / TsaD family. It depends on Fe(2+) as a cofactor.

It is found in the cytoplasm. The enzyme catalyses L-threonylcarbamoyladenylate + adenosine(37) in tRNA = N(6)-L-threonylcarbamoyladenosine(37) in tRNA + AMP + H(+). Required for the formation of a threonylcarbamoyl group on adenosine at position 37 (t(6)A37) in tRNAs that read codons beginning with adenine. Is involved in the transfer of the threonylcarbamoyl moiety of threonylcarbamoyl-AMP (TC-AMP) to the N6 group of A37, together with TsaE and TsaB. TsaD likely plays a direct catalytic role in this reaction. The chain is tRNA N6-adenosine threonylcarbamoyltransferase from Streptococcus pneumoniae (strain Hungary19A-6).